The primary structure comprises 380 residues: O-phospho-L-seryl-tRNA:Cys-tRNA synthase (380 aa).

Pyridoxal 5'-phosphate is bound by residues 86–87, Asn-192, and 215–217; these read AR and SGH. Lys-218 bears the N6-(pyridoxal phosphate)lysine mark.

The protein belongs to the SepCysS family. In terms of assembly, homodimer. Interacts with SepRS. The cofactor is pyridoxal 5'-phosphate.

It catalyses the reaction O-phospho-L-seryl-tRNA(Cys) + hydrogen sulfide + H(+) = L-cysteinyl-tRNA(Cys) + phosphate. Functionally, converts O-phospho-L-seryl-tRNA(Cys) (Sep-tRNA(Cys)) to L-cysteinyl-tRNA(Cys) (Cys-tRNA(Cys)). The chain is O-phospho-L-seryl-tRNA:Cys-tRNA synthase from Methanococcus maripaludis (strain DSM 14266 / JCM 13030 / NBRC 101832 / S2 / LL).